A 328-amino-acid polypeptide reads, in one-letter code: tRNA dimethylallyltransferase (328 aa).

Residue 25-32 (GPTAVGKT) participates in ATP binding. 27–32 (TAVGKT) lines the substrate pocket. The segment at 50-53 (DSMQ) is interaction with substrate tRNA.

The protein belongs to the IPP transferase family. In terms of assembly, monomer. The cofactor is Mg(2+).

It catalyses the reaction adenosine(37) in tRNA + dimethylallyl diphosphate = N(6)-dimethylallyladenosine(37) in tRNA + diphosphate. In terms of biological role, catalyzes the transfer of a dimethylallyl group onto the adenine at position 37 in tRNAs that read codons beginning with uridine, leading to the formation of N6-(dimethylallyl)adenosine (i(6)A). The sequence is that of tRNA dimethylallyltransferase from Halothermothrix orenii (strain H 168 / OCM 544 / DSM 9562).